The chain runs to 113 residues: Protein Wnt-10 (113 aa).

Residue Ser1 is the site of O-palmitoleoyl serine; by PORCN attachment. Cys79 and Cys94 are joined by a disulfide.

It belongs to the Wnt family. Palmitoleoylation is required for efficient binding to frizzled receptors. Depalmitoleoylation leads to Wnt signaling pathway inhibition.

Its subcellular location is the secreted. It localises to the extracellular space. The protein resides in the extracellular matrix. In terms of biological role, ligand for members of the frizzled family of seven transmembrane receptors. Probable developmental protein. May be a signaling molecule which affects the development of discrete regions of tissues. Is likely to signal over only few cell diameters. In Eptatretus stoutii (Pacific hagfish), this protein is Protein Wnt-10 (WNT-10).